The chain runs to 977 residues: Mineralocorticoid receptor (977 aa).

Residues 1–19 (METKGYHSRPEGLDMERRW) are compositionally biased toward basic and acidic residues. 2 disordered regions span residues 1 to 37 (METK…AERT) and 231 to 288 (QGTP…VSSP). The tract at residues 1–601 (METKGYHSRP…STGSSRPSKI (601 aa)) is modulating. Residues 231–243 (QGTPLTCSPTVDN) show a composition bias toward polar residues. A phosphoserine mark is found at Ser-250, Ser-259, Ser-283, Ser-287, and Ser-299. A compositionally biased stretch (low complexity) spans 259-288 (SPLSSPLSSMKSPISSPPSHCSVKSPVSSP). Disordered regions lie at residues 305–327 (NSRC…SPAA) and 344–368 (SGAS…KGAH). Zn(2+) contacts are provided by Cys-602, Cys-605, Cys-619, Cys-622, Cys-638, Cys-644, Cys-654, and Cys-657. 2 consecutive NR C4-type zinc fingers follow at residues 602-622 (CLVC…CGSC) and 638-662 (CAGR…LQKC). A DNA-binding region (nuclear receptor) is located at residues 602–667 (CLVCGDGASG…RLQKCLQAGM (66 aa)). The interval 668–718 (NLGARKSKKLGKLKGLHEEQPQQPPPPQSPEEGTTYIAPAKEPSVNTALVP) is hinge. The interval 682–703 (GLHEEQPQQPPPPQSPEEGTTY) is disordered. An NR LBD domain is found at 719–957 (QLSSISRALT…EFPAMLVEII (239 aa)). 21-hydroxyprogesterone is bound by residues Asn-763 and Gln-769. Aldosterone is bound by residues Asn-763 and Gln-769. Residues Asn-763 and Gln-769 each contribute to the progesterone site. The tract at residues 775–778 (KWAK) is important for coactivator binding. 21-hydroxyprogesterone-binding residues include Arg-810 and Thr-938. Arg-810 and Thr-938 together coordinate aldosterone. Residues Arg-810 and Thr-938 each contribute to the progesterone site.

It belongs to the nuclear hormone receptor family. NR3 subfamily.

The protein localises to the cytoplasm. It localises to the nucleus. Its function is as follows. Receptor for both mineralocorticoids (MC) such as aldosterone and glucocorticoids (GC) such as corticosterone or cortisol. Binds to mineralocorticoid response elements (MRE) and transactivates target genes. The effect of MC is to increase ion and water transport and thus raise extracellular fluid volume and blood pressure and lower potassium levels. The protein is Mineralocorticoid receptor (NR3C2) of Tupaia belangeri (Common tree shrew).